We begin with the raw amino-acid sequence, 226 residues long: DNA mismatch repair protein MutH (226 aa).

Belongs to the MutH family.

Its subcellular location is the cytoplasm. Its function is as follows. Sequence-specific endonuclease that cleaves unmethylated GATC sequences. It is involved in DNA mismatch repair. This Vibrio campbellii (strain ATCC BAA-1116) protein is DNA mismatch repair protein MutH.